Reading from the N-terminus, the 568-residue chain is Urease subunit alpha (568 aa).

The 439-residue stretch at glycine 130–phenylalanine 568 folds into the Urease domain. The Ni(2+) site is built by histidine 135, histidine 137, and lysine 218. Position 218 is an N6-carboxylysine (lysine 218). A substrate-binding site is contributed by histidine 220. Residues histidine 247 and histidine 273 each coordinate Ni(2+). Histidine 321 (proton donor) is an active-site residue. Aspartate 361 lines the Ni(2+) pocket.

It belongs to the metallo-dependent hydrolases superfamily. Urease alpha subunit family. Heterotrimer of UreA (gamma), UreB (beta) and UreC (alpha) subunits. Three heterotrimers associate to form the active enzyme. Ni cation serves as cofactor. In terms of processing, carboxylation allows a single lysine to coordinate two nickel ions.

Its subcellular location is the cytoplasm. It carries out the reaction urea + 2 H2O + H(+) = hydrogencarbonate + 2 NH4(+). It functions in the pathway nitrogen metabolism; urea degradation; CO(2) and NH(3) from urea (urease route): step 1/1. The protein is Urease subunit alpha of Burkholderia cenocepacia (strain ATCC BAA-245 / DSM 16553 / LMG 16656 / NCTC 13227 / J2315 / CF5610) (Burkholderia cepacia (strain J2315)).